The chain runs to 167 residues: uncharacterized protein (167 aa).

Residues 28–59 (LTGIREELKADIDETRLIAESVLEEKEKKVVE) are a coiled coil.

This is an uncharacterized protein from Aquifex aeolicus (strain VF5).